Reading from the N-terminus, the 320-residue chain is Lipoyl synthase (320 aa).

The tract at residues 9–31 is disordered; sequence ANDARPRHPEKAHRPDQPIQRKP. A compositionally biased stretch (basic and acidic residues) spans 12-31; the sequence is ARPRHPEKAHRPDQPIQRKP. Residues Cys-60, Cys-65, Cys-71, Cys-86, Cys-90, Cys-93, and Ser-299 each contribute to the [4Fe-4S] cluster site. In terms of domain architecture, Radical SAM core spans 72–288; the sequence is WEKKHATFMI…ETTAYAKGFL (217 aa).

Belongs to the radical SAM superfamily. Lipoyl synthase family. [4Fe-4S] cluster serves as cofactor.

It is found in the cytoplasm. The catalysed reaction is [[Fe-S] cluster scaffold protein carrying a second [4Fe-4S](2+) cluster] + N(6)-octanoyl-L-lysyl-[protein] + 2 oxidized [2Fe-2S]-[ferredoxin] + 2 S-adenosyl-L-methionine + 4 H(+) = [[Fe-S] cluster scaffold protein] + N(6)-[(R)-dihydrolipoyl]-L-lysyl-[protein] + 4 Fe(3+) + 2 hydrogen sulfide + 2 5'-deoxyadenosine + 2 L-methionine + 2 reduced [2Fe-2S]-[ferredoxin]. Its pathway is protein modification; protein lipoylation via endogenous pathway; protein N(6)-(lipoyl)lysine from octanoyl-[acyl-carrier-protein]: step 2/2. Its function is as follows. Catalyzes the radical-mediated insertion of two sulfur atoms into the C-6 and C-8 positions of the octanoyl moiety bound to the lipoyl domains of lipoate-dependent enzymes, thereby converting the octanoylated domains into lipoylated derivatives. This is Lipoyl synthase from Methylobacterium nodulans (strain LMG 21967 / CNCM I-2342 / ORS 2060).